A 1392-amino-acid chain; its full sequence is ABC transporter G family member 42 (1392 aa).

Positions 1–18 (MTMSQTDGVEFASRNTNE) are enriched in polar residues. The tract at residues 1-26 (MTMSQTDGVEFASRNTNENGHDDDDQ) is disordered. The region spanning 139–413 (SKLSRFMCSN…FEDCGFKCPN (275 aa)) is the ABC transporter 1 domain. ATP is bound at residue 173–180 (GPPSCGKT). One can recognise an ABC transmembrane type-2 1 domain in the interval 491 to 703 (DMLKACSRRE…AEIGLTANEF (213 aa)). Transmembrane regions (helical) follow at residues 509-529 (FVYVFKSGLLIFIGFIAMTVY), 543-563 (YLMGSLFFSLFKLLADGLPEL), 596-616 (IPISFLESFLWTMLTYYVIGY), 627-647 (FLILFALHLSCISMFRAIAAV), 652-672 (VVATTVGSISIVLLSVFGGFI), and 739-759 (FGALIGFTLFFNTVFALALTF). One can recognise an ABC transporter 2 domain in the interval 800–1045 (FTFQDVQYII…VIEYFMRIHG (246 aa)). 837–844 (GVSGAGKT) serves as a coordination point for ATP. One can recognise an ABC transmembrane type-2 2 domain in the interval 1117–1331 (EQFKACLWKQ…VLNGLLTSQY (215 aa)). The next 7 membrane-spanning stretches (helical) occupy residues 1136–1156 (YNLTRIIFMSFTCMLCGILFW), 1175–1195 (MFTVVLFSGINNCSTVLFSVA), 1215–1237 (YSLAQVLVEIPYSLFQSIVYVII), 1255–1275 (FYSIFCTLLIFNYFGMLLVVV), 1281–1301 (IAFTLRSSFYAIVNLFAGYVM), 1309–1329 (WWIWMYYLSPTSWVLNGLLTS), and 1364–1384 (LVAVVLIAFPILLASLFAFFI).

The protein belongs to the ABC transporter superfamily. ABCG family. PDR (TC 3.A.1.205) subfamily. As to expression, confined to shoots.

It localises to the membrane. In terms of biological role, may be a general defense protein. The chain is ABC transporter G family member 42 (ABCG42) from Arabidopsis thaliana (Mouse-ear cress).